Reading from the N-terminus, the 431-residue chain is Enolase (431 aa).

Residue Gln167 coordinates (2R)-2-phosphoglycerate. Catalysis depends on Glu209, which acts as the Proton donor. Residues Asp246, Glu290, and Asp317 each coordinate Mg(2+). Lys342, Arg371, Ser372, and Lys393 together coordinate (2R)-2-phosphoglycerate. The Proton acceptor role is filled by Lys342.

It belongs to the enolase family. As to quaternary structure, component of the RNA degradosome, a multiprotein complex involved in RNA processing and mRNA degradation. It depends on Mg(2+) as a cofactor.

It localises to the cytoplasm. It is found in the secreted. The protein localises to the cell surface. The catalysed reaction is (2R)-2-phosphoglycerate = phosphoenolpyruvate + H2O. The protein operates within carbohydrate degradation; glycolysis; pyruvate from D-glyceraldehyde 3-phosphate: step 4/5. Functionally, catalyzes the reversible conversion of 2-phosphoglycerate (2-PG) into phosphoenolpyruvate (PEP). It is essential for the degradation of carbohydrates via glycolysis. The sequence is that of Enolase from Serratia proteamaculans (strain 568).